A 459-amino-acid chain; its full sequence is UDP-N-acetylmuramoylalanine--D-glutamate ligase (459 aa).

Residue 120–126 participates in ATP binding; the sequence is GSNGKTT.

It belongs to the MurCDEF family.

It localises to the cytoplasm. It catalyses the reaction UDP-N-acetyl-alpha-D-muramoyl-L-alanine + D-glutamate + ATP = UDP-N-acetyl-alpha-D-muramoyl-L-alanyl-D-glutamate + ADP + phosphate + H(+). Its pathway is cell wall biogenesis; peptidoglycan biosynthesis. Cell wall formation. Catalyzes the addition of glutamate to the nucleotide precursor UDP-N-acetylmuramoyl-L-alanine (UMA). This Lactobacillus acidophilus (strain ATCC 700396 / NCK56 / N2 / NCFM) protein is UDP-N-acetylmuramoylalanine--D-glutamate ligase.